The following is a 248-amino-acid chain: Phosphomannomutase (248 aa).

Residue aspartate 12 is the Nucleophile of the active site. Mg(2+) is bound by residues aspartate 12 and aspartate 14. Aspartate 14 (proton donor/acceptor) is an active-site residue. Positions 21, 123, 134, 141, 179, and 181 each coordinate alpha-D-mannose 1-phosphate. Residues aspartate 207, phenylalanine 219, and threonine 224 each contribute to the Mg(2+) site.

This sequence belongs to the eukaryotic PMM family. As to quaternary structure, homodimer. Requires Mg(2+) as cofactor.

It is found in the cytoplasm. The catalysed reaction is alpha-D-mannose 1-phosphate = D-mannose 6-phosphate. Its pathway is nucleotide-sugar biosynthesis; GDP-alpha-D-mannose biosynthesis; alpha-D-mannose 1-phosphate from D-fructose 6-phosphate: step 2/2. Catalyzes the interconversion of mannose-6-phosphate to mannose-1-phosphate, the precursor for the synthesis of GDP-mannose. GDP-mannose is an essential sugar nucleotide for the synthesis of D-mannose-containing cell wall polysaccharides (galactomannans and glucomannans), glycolipids, glycoproteins and the antioxidant L-ascorbate. In Spinacia oleracea (Spinach), this protein is Phosphomannomutase.